The following is a 501-amino-acid chain: 2-isopropylmalate synthase (501 aa).

In terms of domain architecture, Pyruvate carboxyltransferase spans 7–269 (VRIFDTTLRD…QTQIKTEEIA (263 aa)). D16, H204, H206, and N240 together coordinate Mn(2+). Residues 394–501 (QLEGFTVSTG…RAYISALNRL (108 aa)) are regulatory domain.

Belongs to the alpha-IPM synthase/homocitrate synthase family. LeuA type 1 subfamily. As to quaternary structure, homodimer. Mn(2+) serves as cofactor.

Its subcellular location is the cytoplasm. It catalyses the reaction 3-methyl-2-oxobutanoate + acetyl-CoA + H2O = (2S)-2-isopropylmalate + CoA + H(+). It participates in amino-acid biosynthesis; L-leucine biosynthesis; L-leucine from 3-methyl-2-oxobutanoate: step 1/4. In terms of biological role, catalyzes the condensation of the acetyl group of acetyl-CoA with 3-methyl-2-oxobutanoate (2-ketoisovalerate) to form 3-carboxy-3-hydroxy-4-methylpentanoate (2-isopropylmalate). In Leptospira interrogans serogroup Icterohaemorrhagiae serovar copenhageni (strain Fiocruz L1-130), this protein is 2-isopropylmalate synthase.